A 681-amino-acid chain; its full sequence is Minichromosome maintenance domain-containing protein 2 (681 aa).

Phosphoserine is present on Ser292. Residues 533–621 (KQFTTEDFEK…LIAALLLEIS (89 aa)) form the MCM domain.

As to expression, predominantly expressed in the gonads and the brain. Not detected in the heart, lung, nor embryonic fibroblasts.

In terms of biological role, plays an important role in meiotic recombination and associated DNA double-strand break repair. This is Minichromosome maintenance domain-containing protein 2 (Mcmdc2) from Mus musculus (Mouse).